Reading from the N-terminus, the 52-residue chain is KAVAVLRGDSNVSGVVRFEQTHESEPTKIFIGQNSILALTVVVHAGTDDYGK.

His-44 provides a ligand contact to Cu cation.

The protein belongs to the Cu-Zn superoxide dismutase family. Homodimer. The cofactor is Cu cation. Zn(2+) is required as a cofactor.

Its subcellular location is the cytoplasm. The catalysed reaction is 2 superoxide + 2 H(+) = H2O2 + O2. Functionally, destroys radicals which are normally produced within the cells and which are toxic to biological systems. In Debaryomyces hansenii (Yeast), this protein is Superoxide dismutase [Cu-Zn] 2.